The sequence spans 418 residues: Nuclear hormone receptor family member nhr-209 (418 aa).

The nuclear receptor DNA-binding region spans 43–121 (PEKCAVCKNA…VGMDSTAIRA (79 aa)). NR C4-type zinc fingers lie at residues 46 to 66 (CAVCKNAAIGYHYNVPSCNGC) and 82 to 104 (CMNHKNCLDEIESDESQRLCKGC). Residues 174–414 (TIPDGFEDMR…SHPPKSLFDE (241 aa)) enclose the NR LBD domain. The AF-2 stretch occupies residues 403 to 414 (ECSHPPKSLFDE).

The protein belongs to the nuclear hormone receptor family.

Its subcellular location is the nucleus. In terms of biological role, transcriptional regulator. Plays a role in modulation of lifespan and immunity. In Caenorhabditis elegans, this protein is Nuclear hormone receptor family member nhr-209.